A 449-amino-acid chain; its full sequence is 3-phosphoshikimate 1-carboxyvinyltransferase (449 aa).

A disordered region spans residues 1 to 30 (MSHDSSPQPLTAAPGAPLRGRLRPPGDKSI). Residues K28, S29, and R33 each contribute to the 3-phosphoshikimate site. K28 provides a ligand contact to phosphoenolpyruvate. Residues G101 and R129 each coordinate phosphoenolpyruvate. 4 residues coordinate 3-phosphoshikimate: S175, Q177, D330, and K357. Q177 contributes to the phosphoenolpyruvate binding site. The Proton acceptor role is filled by D330. 2 residues coordinate phosphoenolpyruvate: R361 and R405.

The protein belongs to the EPSP synthase family. Monomer.

It is found in the cytoplasm. It carries out the reaction 3-phosphoshikimate + phosphoenolpyruvate = 5-O-(1-carboxyvinyl)-3-phosphoshikimate + phosphate. The protein operates within metabolic intermediate biosynthesis; chorismate biosynthesis; chorismate from D-erythrose 4-phosphate and phosphoenolpyruvate: step 6/7. Catalyzes the transfer of the enolpyruvyl moiety of phosphoenolpyruvate (PEP) to the 5-hydroxyl of shikimate-3-phosphate (S3P) to produce enolpyruvyl shikimate-3-phosphate and inorganic phosphate. The chain is 3-phosphoshikimate 1-carboxyvinyltransferase from Methylobacterium radiotolerans (strain ATCC 27329 / DSM 1819 / JCM 2831 / NBRC 15690 / NCIMB 10815 / 0-1).